A 259-amino-acid polypeptide reads, in one-letter code: Peroxisomal membrane protein 11B (259 aa).

K43 is subject to N6-acetyllysine. The tract at residues 157–176 is disordered; that stretch reads LKGSGGGVPGGSETGGLGGP. Residues 159–176 show a composition bias toward gly residues; sequence GSGGGVPGGSETGGLGGP. An interaction with PEX19, PEX11G and FIS1 and peroxisome targeting region spans residues 211 to 259; it reads VVRNACDLFIPLDKLGLWRCGPGIVGLCGLVSSILSILTLIYPWLRLKP. The chain crosses the membrane as a helical span at residues 233–255; that stretch reads GIVGLCGLVSSILSILTLIYPWL.

The protein belongs to the peroxin-11 family. Homodimer. Heterodimer with PEX11G. Interacts with PEX19. Interacts with FIS1.

The protein resides in the peroxisome membrane. Involved in peroxisomal proliferation. May regulate peroxisome division by recruiting the dynamin-related GTPase DNM1L to the peroxisomal membrane. Promotes membrane protrusion and elongation on the peroxisomal surface. This Homo sapiens (Human) protein is Peroxisomal membrane protein 11B (PEX11B).